The chain runs to 282 residues: Elongation factor Ts (282 aa).

An involved in Mg(2+) ion dislocation from EF-Tu region spans residues 80–83; that stretch reads TDFV.

This sequence belongs to the EF-Ts family.

Its subcellular location is the cytoplasm. Functionally, associates with the EF-Tu.GDP complex and induces the exchange of GDP to GTP. It remains bound to the aminoacyl-tRNA.EF-Tu.GTP complex up to the GTP hydrolysis stage on the ribosome. The chain is Elongation factor Ts from Aliivibrio salmonicida (strain LFI1238) (Vibrio salmonicida (strain LFI1238)).